We begin with the raw amino-acid sequence, 668 residues long: mRNA cap guanine-N(7) methyltransferase (668 aa).

Basic and acidic residues predominate over residues 1-19; it reads MYDPARDSWEERDGDEARS. A disordered region spans residues 1 to 281; that stretch reads MYDPARDSWE…RAQVEEAMRA (281 aa). Over residues 44-65 the composition is skewed to polar residues; the sequence is GENNNTTDLQQHPDPSSKTTAS. Low complexity predominate over residues 73-88; sequence SQPAQPTTQTPPSVST. Residues 100 to 129 show a composition bias toward polar residues; sequence KASNPQSLTSTAQNQLNKSNTTMENTSGSA. Residues 133–142 show a composition bias toward basic and acidic residues; sequence PRADPSDKPN. Residues 148 to 157 show a composition bias toward polar residues; it reads ASPTDQNGSQ. The span at 257–279 shows a compositional bias: basic and acidic residues; sequence LVDRETLRRRQEERERAQVEEAM. The mRNA cap 0 methyltransferase domain occupies 310-668; that stretch reads SKIKGLRSFN…FYHAFCFYKV (359 aa). 319 to 320 lines the mRNA pocket; that stretch reads NN. S-adenosyl-L-methionine contacts are provided by residues Lys323, Gly366, Asp390, Asp428, 471–473, and Tyr476; that span reads MFT. A disordered region spans residues 524–547; that stretch reads ARQAQAKKEKSDEAPEDGEVEEDD. Residues 537 to 547 are compositionally biased toward acidic residues; the sequence is APEDGEVEEDD.

It belongs to the class I-like SAM-binding methyltransferase superfamily. mRNA cap 0 methyltransferase family.

Its subcellular location is the nucleus. The enzyme catalyses a 5'-end (5'-triphosphoguanosine)-ribonucleoside in mRNA + S-adenosyl-L-methionine = a 5'-end (N(7)-methyl 5'-triphosphoguanosine)-ribonucleoside in mRNA + S-adenosyl-L-homocysteine. Its function is as follows. Responsible for methylating the 5'-cap structure of mRNAs. The polypeptide is mRNA cap guanine-N(7) methyltransferase (abd1) (Aspergillus fumigatus (strain ATCC MYA-4609 / CBS 101355 / FGSC A1100 / Af293) (Neosartorya fumigata)).